Reading from the N-terminus, the 37-residue chain is Large ribosomal subunit protein bL36 (37 aa).

The protein belongs to the bacterial ribosomal protein bL36 family.

The protein is Large ribosomal subunit protein bL36 of Leptospira interrogans serogroup Icterohaemorrhagiae serovar Lai (strain 56601).